The primary structure comprises 501 residues: Cytochrome P450 2J5 (501 aa).

Cys-447 is a heme binding site.

The protein belongs to the cytochrome P450 family. Heme serves as cofactor.

The protein resides in the endoplasmic reticulum membrane. It localises to the microsome membrane. The enzyme catalyses an organic molecule + reduced [NADPH--hemoprotein reductase] + O2 = an alcohol + oxidized [NADPH--hemoprotein reductase] + H2O + H(+). This chain is Cytochrome P450 2J5 (Cyp2j5), found in Mus musculus (Mouse).